The primary structure comprises 563 residues: NAD(P)H-quinone oxidoreductase chain 4 (563 aa).

15 helical membrane passes run 25–45 (FPWL…VPFI), 56–76 (WFAL…YLYG), 90–110 (VSWL…ISMP), 111–131 (LILL…PVTF), 133–153 (PKLF…VFAV), 157–177 (LLFF…LAIW), 189–209 (FIIY…AMGF), 230–250 (GFQL…LPIV), 264–284 (TAPV…YALM), 298–318 (FAPL…LTSF), 335–355 (MGFV…GAML), 356–376 (QMIS…ATYD), 397–417 (FALW…SGFV), 438–458 (IVIA…LLSM), and 485–505 (VYII…PRLM).

Belongs to the complex I subunit 4 family.

The protein resides in the cellular thylakoid membrane. It catalyses the reaction a plastoquinone + NADH + (n+1) H(+)(in) = a plastoquinol + NAD(+) + n H(+)(out). It carries out the reaction a plastoquinone + NADPH + (n+1) H(+)(in) = a plastoquinol + NADP(+) + n H(+)(out). Its function is as follows. NDH-1 shuttles electrons from NAD(P)H, via FMN and iron-sulfur (Fe-S) centers, to quinones in the respiratory chain. The immediate electron acceptor for the enzyme in this species is believed to be plastoquinone. Couples the redox reaction to proton translocation (for every two electrons transferred, four hydrogen ions are translocated across the cytoplasmic membrane), and thus conserves the redox energy in a proton gradient. This is NAD(P)H-quinone oxidoreductase chain 4 from Prochlorococcus marinus (strain MIT 9303).